Consider the following 496-residue polypeptide: Pseudooxynicotine dehydrogenase (496 aa).

A signal peptide (tat-type signal) is located at residues 1–42 (MTKDGDEGSKSGVSRRKFLGSAAVGVATAGIASQLLTLSAPA). Positions 69, 88, 96, 113, 285, 461, and 471 each coordinate FAD.

This sequence belongs to the flavin monoamine oxidase family. As to quaternary structure, homodimer. FAD is required as a cofactor. In terms of processing, predicted to be exported by the Tat system. The position of the signal peptide cleavage has not been experimentally proven.

The protein resides in the periplasm. It catalyses the reaction pseudooxynicotine + 2 Fe(III)-[cytochrome c] + H2O = 4-oxo-4-(pyridin-3-yl)butanal + methylamine + 2 Fe(II)-[cytochrome c] + 2 H(+). It participates in alkaloid degradation; nicotine degradation. Its activity is regulated as follows. Strongly inhibited by Na(2)MoO(4) and FeCl(3). Activity is nearly twice as high in the presence of Na(2)WO(4). Its function is as follows. Involved in nicotine degradation. Catalyzes the deamination of pseudooxynicotine to 3-succinoylsemialdehyde-pyridine. Functions as a dehydrogenase that uses the c-type cytochrome protein CycN as the physiological electron acceptor. O(2) is a poor electron acceptor. Pnao is oxidized by CycN 230 times faster than O(2) at equivalent oxidant concentrations. This chain is Pseudooxynicotine dehydrogenase, found in Pseudomonas putida (strain DSM 28022 / S16).